Reading from the N-terminus, the 198-residue chain is Peptide deformylase (198 aa).

Residues Cys123 and His167 each coordinate Fe cation. Glu168 is an active-site residue. His171 is a binding site for Fe cation.

It belongs to the polypeptide deformylase family. Requires Fe(2+) as cofactor.

The enzyme catalyses N-terminal N-formyl-L-methionyl-[peptide] + H2O = N-terminal L-methionyl-[peptide] + formate. Functionally, removes the formyl group from the N-terminal Met of newly synthesized proteins. Requires at least a dipeptide for an efficient rate of reaction. N-terminal L-methionine is a prerequisite for activity but the enzyme has broad specificity at other positions. This Ureaplasma parvum serovar 3 (strain ATCC 27815 / 27 / NCTC 11736) protein is Peptide deformylase.